The following is a 96-amino-acid chain: Dynein light chain roadblock-type 2 (96 aa).

Position 2 is an N-acetylalanine (alanine 2).

The protein belongs to the GAMAD family. Homodimer. The cytoplasmic dynein 1 complex consists of two catalytic heavy chains (HCs) and a number of non-catalytic subunits presented by intermediate chains (ICs), light intermediate chains (LICs) and light chains (LCs); the composition seems to vary in respect to the IC, LIC and LC composition. The heavy chain homodimer serves as a scaffold for the probable homodimeric assembly of the respective non-catalytic subunits. The ICs and LICs bind directly to the HC dimer and the LCs assemble on the IC dimer. Interacts with DYNC1I1 and DYNC1I2. Self-associates. Interacts with DYNLRB1. As to expression, high expression in heart, brain, placenta, skeletal muscle, prostate and small intestine; moderate in kidney, pancreas, spleen, testis, ovary and colon; low in lung, liver, thymus and leukocyte.

It is found in the cytoplasm. Its subcellular location is the cytoskeleton. Acts as one of several non-catalytic accessory components of the cytoplasmic dynein 1 complex that are thought to be involved in linking dynein to cargos and to adapter proteins that regulate dynein function. Cytoplasmic dynein 1 acts as a motor for the intracellular retrograde motility of vesicles and organelles along microtubules. The sequence is that of Dynein light chain roadblock-type 2 (DYNLRB2) from Homo sapiens (Human).